A 321-amino-acid chain; its full sequence is Putative ribose-phosphate pyrophosphokinase 2 (321 aa).

Residues 43–45 (DGE) and 102–103 (RQ) contribute to the ATP site. Residues histidine 136 and aspartate 176 each coordinate Mg(2+). Residue aspartate 225 participates in D-ribose 5-phosphate binding.

It belongs to the ribose-phosphate pyrophosphokinase family. Class I subfamily. In terms of assembly, homohexamer. Mg(2+) serves as cofactor.

It localises to the cytoplasm. It carries out the reaction D-ribose 5-phosphate + ATP = 5-phospho-alpha-D-ribose 1-diphosphate + AMP + H(+). The protein operates within metabolic intermediate biosynthesis; 5-phospho-alpha-D-ribose 1-diphosphate biosynthesis; 5-phospho-alpha-D-ribose 1-diphosphate from D-ribose 5-phosphate (route I): step 1/1. Functionally, involved in the biosynthesis of the central metabolite phospho-alpha-D-ribosyl-1-pyrophosphate (PRPP) via the transfer of pyrophosphoryl group from ATP to 1-hydroxyl of ribose-5-phosphate (Rib-5-P). This is Putative ribose-phosphate pyrophosphokinase 2 from Lactiplantibacillus plantarum (strain ATCC BAA-793 / NCIMB 8826 / WCFS1) (Lactobacillus plantarum).